Here is a 148-residue protein sequence, read N- to C-terminus: uncharacterized protein (148 aa).

Residues 8-148 form the N-acetyltransferase domain; it reads QVMQEPELKI…DGFLTLILRN (141 aa).

Belongs to the acetyltransferase family.

This is an uncharacterized protein from Bacillus subtilis (strain 168).